The following is a 499-amino-acid chain: Bifunctional purine biosynthesis protein PurH (499 aa).

In terms of domain architecture, MGS-like spans 1–144 (MIKRALISVF…KNFKDVVVLT (144 aa)).

It belongs to the PurH family.

It catalyses the reaction (6R)-10-formyltetrahydrofolate + 5-amino-1-(5-phospho-beta-D-ribosyl)imidazole-4-carboxamide = 5-formamido-1-(5-phospho-D-ribosyl)imidazole-4-carboxamide + (6S)-5,6,7,8-tetrahydrofolate. The enzyme catalyses IMP + H2O = 5-formamido-1-(5-phospho-D-ribosyl)imidazole-4-carboxamide. It participates in purine metabolism; IMP biosynthesis via de novo pathway; 5-formamido-1-(5-phospho-D-ribosyl)imidazole-4-carboxamide from 5-amino-1-(5-phospho-D-ribosyl)imidazole-4-carboxamide (10-formyl THF route): step 1/1. The protein operates within purine metabolism; IMP biosynthesis via de novo pathway; IMP from 5-formamido-1-(5-phospho-D-ribosyl)imidazole-4-carboxamide: step 1/1. In Clostridium botulinum (strain Loch Maree / Type A3), this protein is Bifunctional purine biosynthesis protein PurH.